We begin with the raw amino-acid sequence, 306 residues long: Lymphotoxin-beta (306 aa).

Residues 1–27 (MGTRGLQGLGGRPQGRGCLLLAVAGAT) lie on the Cytoplasmic side of the membrane. A helical; Signal-anchor for type II membrane protein transmembrane segment spans residues 28–48 (SLVTLLLAVPITVLAVLALVP). At 49 to 306 (QDQGRRVEKI…KTFFGAVMVG (258 aa)) the chain is on the extracellular side. 2 disordered regions span residues 63–112 (AQAQ…GPVA) and 127–151 (PAADSTPDPGVQQLPKGEPETDLNP). A compositionally biased stretch (low complexity) spans 74–85 (PSCILPSPSSLS). Positions 95-112 (QRSNASRNLASTSQGPVA) are enriched in polar residues. N-linked (GlcNAc...) asparagine glycosylation is present at Asn-98. One can recognise a THD domain in the interval 154–305 (PAAHLIGAWM…GKTFFGAVMV (152 aa)). The N-linked (GlcNAc...) asparagine glycan is linked to Asn-284.

This sequence belongs to the tumor necrosis factor family. As to quaternary structure, heterotrimer of either two LTB and one LTA subunits or (less prevalent) two LTA and one LTB subunits.

The protein localises to the membrane. Functionally, cytokine that binds to LTBR/TNFRSF3. May play a specific role in immune response regulation. Provides the membrane anchor for the attachment of the heterotrimeric complex to the cell surface. This is Lymphotoxin-beta (Ltb) from Mus musculus (Mouse).